The primary structure comprises 159 residues: Histone H1 (159 aa).

3 disordered regions span residues M1–L31, K80–K99, and A132–S159. Positions V10–R22 are enriched in basic residues. The H15 domain occupies T12–A102. Positions C84–G93 are enriched in gly residues. The span at K134–K148 shows a compositional bias: basic residues. Residues K149 to S159 are compositionally biased toward basic and acidic residues.

The protein belongs to the histone H1/H5 family.

It is found in the nucleus. The protein localises to the chromosome. Functionally, histones H1 are necessary for the condensation of nucleosome chains into higher-order structures. The chain is Histone H1 from Psammechinus miliaris (Green sea urchin).